The sequence spans 386 residues: Nucleosome assembly protein 1-like 4 (386 aa).

The tract at residues 1-28 (MAENSLSDGGPADSVEAAKNASNTEKLT) is disordered. Ala-2 bears the N-acetylalanine mark. Phosphoserine is present on residues Ser-5, Ser-7, and Ser-49. Thr-51 is subject to Phosphothreonine. Ser-53 and Ser-54 each carry phosphoserine. Thr-58 bears the Phosphothreonine mark. Lys-105 bears the N6-acetyllysine mark. Phosphoserine is present on Ser-125. Position 146 is an N6-acetyllysine (Lys-146). Residues 265–271 (IKKKQKH) carry the Nuclear localization signal motif. The residue at position 304 (Ser-304) is a Phosphoserine. Residues 339–370 (AIEDDDNFEEGEEGEEEELEGDEEGEDEDDAD) show a composition bias toward acidic residues. The tract at residues 339–386 (AIEDDDNFEEGEEGEEEELEGDEEGEDEDDADVNPKKEPIQPAECKQQ) is disordered.

It belongs to the nucleosome assembly protein (NAP) family. Interacts with core (H2A, H2B, H3, H4) and linker (H1) histones. In terms of processing, polyglutamylated and polyglycylated. These 2 modifications occur exclusively on glutamate residues and result in either polyglutamate or polyglycine chains on the gamma-carboxyl group. Both modifications can coexist on the same protein on adjacent residues, and lowering polyglycylation levels increases polyglutamylation, and reciprocally. Polyglutamylated by TTLL4. Phosphorylated at the G0/G1 boundary but it is not phosphorylated in S-phase. Phosphorylated protein remains in the cytoplasm in a complex with histones during the G0/G1 transition, whereas dephosphorylation triggers its transport into the nucleus at the G1/S-boundary.

The protein localises to the nucleus. It localises to the cytoplasm. Acts as a histone chaperone in nucleosome assembly. In Rattus norvegicus (Rat), this protein is Nucleosome assembly protein 1-like 4 (Nap1l4).